Consider the following 216-residue polypeptide: Serine acetyltransferase (216 aa).

The protein belongs to the transferase hexapeptide repeat family.

It localises to the cytoplasm. The catalysed reaction is L-serine + acetyl-CoA = O-acetyl-L-serine + CoA. It participates in amino-acid biosynthesis; L-cysteine biosynthesis; L-cysteine from L-serine: step 1/2. The sequence is that of Serine acetyltransferase (cysE) from Staphylococcus xylosus.